The sequence spans 302 residues: D-alanine--D-alanine ligase (302 aa).

One can recognise an ATP-grasp domain in the interval 99 to 298 (KRLFVAEGIP…FEQLIQRIID (200 aa)). An ATP-binding site is contributed by 128–183 (LAALGSPVVVKPADGGSTVGVTIAREAGHLPEAVRLALQYSPQVLIEQYIPGQEIT). D252, E265, and N267 together coordinate Mg(2+).

Belongs to the D-alanine--D-alanine ligase family. Mg(2+) is required as a cofactor. It depends on Mn(2+) as a cofactor.

It localises to the cytoplasm. It carries out the reaction 2 D-alanine + ATP = D-alanyl-D-alanine + ADP + phosphate + H(+). It participates in cell wall biogenesis; peptidoglycan biosynthesis. Functionally, cell wall formation. This Gloeobacter violaceus (strain ATCC 29082 / PCC 7421) protein is D-alanine--D-alanine ligase.